Here is a 130-residue protein sequence, read N- to C-terminus: Acidic phospholipase A2 daboiatoxin B chain (130 aa).

Residues 1 to 8 (MCLIGVEG) form the signal peptide. Intrachain disulfides connect Cys34/Cys123, Cys36/Cys52, Cys51/Cys103, Cys57/Cys130, Cys58/Cys96, Cys65/Cys89, and Cys83/Cys94. Residues Tyr35, Gly37, and Gly39 each contribute to the Ca(2+) site. Residue His55 is part of the active site. Residue Asp56 coordinates Ca(2+). Asp97 is a catalytic residue.

It belongs to the phospholipase A2 family. Group II subfamily. D49 sub-subfamily. In terms of assembly, heterodimer of an acidic protein having phospholipase A2 activity (B chain) and an A chain which weakly inhibits the B chain enzymatic activity but potentiates its lethal potency. The cofactor is Ca(2+). In terms of tissue distribution, expressed by the venom gland.

The protein resides in the secreted. The catalysed reaction is a 1,2-diacyl-sn-glycero-3-phosphocholine + H2O = a 1-acyl-sn-glycero-3-phosphocholine + a fatty acid + H(+). Its function is as follows. Monomer: Snake venom phospholipase A2 (PLA2) that shows a high PLA2 activity (2110 umol/min/mg). Functionally, heterodimer (A and B chains): snake venom phospholipase A2 that shows a moderate PLA2 activity (1377 umol/min/mg). Acts as a presynaptic neurotoxin. In vivo, induces edema and produces neurotoxic symptoms in mice. It exhibits indirect hemolysis and a strong myonecrotic activity and is cytotoxic. PLA2 catalyzes the calcium-dependent hydrolysis of the 2-acyl groups in 3-sn-phosphoglycerides. This is Acidic phospholipase A2 daboiatoxin B chain from Daboia siamensis (Eastern Russel's viper).